A 479-amino-acid polypeptide reads, in one-letter code: mRNA export factor ICP27 homolog (479 aa).

Residues 1 to 15 (MVPSQRLSRTSSISS) are compositionally biased toward low complexity. Disordered stretches follow at residues 1–78 (MVPS…SSVV) and 92–210 (KWDL…NKPW). Residues 35 to 44 (TDCDMDPMEG) are compositionally biased toward acidic residues. Residues 132–142 (EVHGCTDESYG) are compositionally biased toward basic and acidic residues. Cys354, His445, Cys449, and Cys454 together coordinate Zn(2+). Residues 354 to 454 (CFLPNTRDYN…HTRDCRSASC (101 aa)) form a CHC2-type zinc finger.

The protein belongs to the HHV-1 ICP27 protein family. In terms of assembly, interacts with host XPO1 and with the XPO1 export pathway components small GTPase RAN and nucleoporin NUP214. Interacts with host SPEN, OTT1 and OTT3. Interacts with host SRSF1, SRSF3, SRSF7 and SRPK1. Interacts with host DHX9; this interaction may have an inhibitory effect on virion production. Interacts (via N-terminus) with host NXF1; this interaction plays a role in mRNA export. Phosphorylated by cellular protein kinase CK2.

Its subcellular location is the host nucleus. The protein resides in the host cytoplasm. Promotes the nuclear export of a subset of early and late viral mRNAs by interacting with mRNAs and cellular export proteins. Additionally may prevent the establishment of cellular antiviral state, by acting as an alternative splicing factor for cellular RNAs such as STAT1, resulting in a STAT1 mRNA incapable of producing the STAT1alpha isoform. The chain is mRNA export factor ICP27 homolog from Homo sapiens (Human).